The primary structure comprises 115 residues: NAD(P)H-quinone oxidoreductase subunit M (115 aa).

The protein belongs to the complex I NdhM subunit family. In terms of assembly, NDH-1 can be composed of about 15 different subunits; different subcomplexes with different compositions have been identified which probably have different functions.

The protein resides in the cellular thylakoid membrane. It carries out the reaction a plastoquinone + NADH + (n+1) H(+)(in) = a plastoquinol + NAD(+) + n H(+)(out). The enzyme catalyses a plastoquinone + NADPH + (n+1) H(+)(in) = a plastoquinol + NADP(+) + n H(+)(out). In terms of biological role, NDH-1 shuttles electrons from an unknown electron donor, via FMN and iron-sulfur (Fe-S) centers, to quinones in the respiratory and/or the photosynthetic chain. The immediate electron acceptor for the enzyme in this species is believed to be plastoquinone. Couples the redox reaction to proton translocation, and thus conserves the redox energy in a proton gradient. Cyanobacterial NDH-1 also plays a role in inorganic carbon-concentration. This Prochlorococcus marinus (strain MIT 9211) protein is NAD(P)H-quinone oxidoreductase subunit M.